Reading from the N-terminus, the 271-residue chain is Zinc-finger homeodomain protein 8 (271 aa).

Position 16 is a phosphoserine (serine 16). The ZF-HD dimerization-type; degenerate zinc-finger motif lies at tyrosine 56 to glutamate 107. Residues histidine 125–proline 154 form a disordered region. A DNA-binding region (homeobox) is located at residues arginine 179–alanine 242.

As to quaternary structure, homo- and heterodimer with other ZFHD proteins. Interacts with MIF1, MIF2 and MIF3; these interactions prevent nuclear localization and DNA-binding to inhibit transcription regulation activity. Binds to ZHD1, ZHD2, ZHD4, ZHD10 and ZHD11. Interacts with HIPP30. Mostly expressed in flowers and inflorescence.

It localises to the nucleus. In terms of biological role, putative transcription factor. This chain is Zinc-finger homeodomain protein 8 (ZHD8), found in Arabidopsis thaliana (Mouse-ear cress).